A 470-amino-acid chain; its full sequence is Glutamate--tRNA ligase 1 (470 aa).

Residues 8–18 (PSPTGYLHVGG) carry the 'HIGH' region motif. The short motif at 250–254 (KLSKR) is the 'KMSKS' region element. Lysine 253 contacts ATP.

This sequence belongs to the class-I aminoacyl-tRNA synthetase family. Glutamate--tRNA ligase type 1 subfamily. In terms of assembly, monomer.

It localises to the cytoplasm. It catalyses the reaction tRNA(Glu) + L-glutamate + ATP = L-glutamyl-tRNA(Glu) + AMP + diphosphate. Catalyzes the attachment of glutamate to tRNA(Glu) in a two-step reaction: glutamate is first activated by ATP to form Glu-AMP and then transferred to the acceptor end of tRNA(Glu). This Pseudothermotoga lettingae (strain ATCC BAA-301 / DSM 14385 / NBRC 107922 / TMO) (Thermotoga lettingae) protein is Glutamate--tRNA ligase 1.